The following is a 417-amino-acid chain: Serine hydroxymethyltransferase (417 aa).

(6S)-5,6,7,8-tetrahydrofolate is bound by residues L121 and 125–127 (GHL). Position 230 is an N6-(pyridoxal phosphate)lysine (K230). A (6S)-5,6,7,8-tetrahydrofolate-binding site is contributed by E245.

This sequence belongs to the SHMT family. Homodimer. It depends on pyridoxal 5'-phosphate as a cofactor.

It localises to the cytoplasm. The enzyme catalyses (6R)-5,10-methylene-5,6,7,8-tetrahydrofolate + glycine + H2O = (6S)-5,6,7,8-tetrahydrofolate + L-serine. Its pathway is one-carbon metabolism; tetrahydrofolate interconversion. It functions in the pathway amino-acid biosynthesis; glycine biosynthesis; glycine from L-serine: step 1/1. Its function is as follows. Catalyzes the reversible interconversion of serine and glycine with tetrahydrofolate (THF) serving as the one-carbon carrier. This reaction serves as the major source of one-carbon groups required for the biosynthesis of purines, thymidylate, methionine, and other important biomolecules. Also exhibits THF-independent aldolase activity toward beta-hydroxyamino acids, producing glycine and aldehydes, via a retro-aldol mechanism. This is Serine hydroxymethyltransferase from Desulfitobacterium hafniense (strain DSM 10664 / DCB-2).